A 63-amino-acid polypeptide reads, in one-letter code: Venom peptide 2a (63 aa).

The signal sequence occupies residues 1 to 22 (MRGTSFILFAVVVILGFLNANA). 5 AXPX repeats span residues 22 to 25 (AEPL), 26 to 29 (ANPA), 32 to 35 (ANPD), 38 to 41 (ANPD), and 44 to 47 (ANPE). A propeptide spanning residues 23–48 (EPLANPAPLANPDPLANPDPLANPEA) is cleaved from the precursor. Leucine 62 is modified (leucine amide).

In terms of tissue distribution, expressed by the venom gland.

It is found in the secreted. Its subcellular location is the target cell membrane. In terms of biological role, antimicrobial peptide. Shows activities against Gram-positive bacteria (S.aureus MIC=50 uM and 200 ug/ml, and B.subtilis MIC=200 ug/ml), Gram-negative bacterium E.coli (MIC=100 uM and 200 ug/ml) and fungi (B.cinerea MIC=5 uM, S.cerevisiae MIC=128 ug/ml, S.pombe MIC=128 ug/ml, A.nidulans MIC=128 ug/ml, and C.albicans MIC=64-100 uM). Shows cytolytic activity against insect cell lines. Its hemolytic activity is controversial, as Baek and colleagues report no activity while Bea and colleagues note a hemolytic activity. In vivo, peptide injection in the vicinity of the head and thorax of lepidopteran larvae induces feeding disorder followed by death due to starvation. Is weakly lethal when tested on water flies (D.magna), but is not lethal on lady beetles (H.convergens). The chain is Venom peptide 2a from Eumenes pomiformis (Potter wasp).